Reading from the N-terminus, the 366-residue chain is uncharacterized protein (366 aa).

To B.subtilis XkdV.

This is an uncharacterized protein from Bacillus subtilis (strain 168).